Reading from the N-terminus, the 384-residue chain is Glucans biosynthesis protein C (384 aa).

Transmembrane regions (helical) follow at residues 17 to 37 (AWLM…THSW), 54 to 74 (FIHA…SYML), 91 to 111 (VGIP…ILLQ), 140 to 160 (LWFL…FTWF), 173 to 193 (AISL…YAAI), 212 to 232 (FIVM…LAFI), 240 to 260 (FTTP…AYLL), 274 to 294 (TESV…FSLG), 311 to 331 (ASLF…AYIT), and 338 to 358 (LIGF…LYEI).

Belongs to the acyltransferase 3 family. OpgC subfamily.

The protein localises to the cell membrane. Its pathway is glycan metabolism; osmoregulated periplasmic glucan (OPG) biosynthesis. In terms of biological role, necessary for the succinyl substitution of periplasmic glucans. Could catalyze the transfer of succinyl residues from the cytoplasmic side of the membrane to the nascent glucan backbones on the periplasmic side of the membrane. This chain is Glucans biosynthesis protein C, found in Salmonella heidelberg (strain SL476).